An 807-amino-acid polypeptide reads, in one-letter code: Poly-beta-1,6-N-acetyl-D-glucosamine export protein (807 aa).

An N-terminal signal peptide occupies residues 1–26 (MYSSSRKRCPKTKWALKLLTAAFLAA). TPR repeat units lie at residues 98-131 (ARGY…EPQN), 165-198 (KANL…NAST), and 279-311 (RIQV…GQII).

It is found in the cell outer membrane. Its function is as follows. Exports the biofilm adhesin polysaccharide poly-beta-1,6-N-acetyl-D-glucosamine (PGA) across the outer membrane. The PGA transported seems to be partially N-deacetylated since N-deacetylation of PGA by PgaB is needed for PGA export through the PgaA porin. This is Poly-beta-1,6-N-acetyl-D-glucosamine export protein (pgaA) from Escherichia coli O157:H7.